The chain runs to 147 residues: Angiogenin (147 aa).

Residues 1–24 (MVMGLGVLLLVFVLGLGLTPPTLA) form the signal peptide. At Q25 the chain carries Pyrrolidone carboxylic acid. H37 (proton acceptor) is an active-site residue. R45 and D46 together coordinate tRNA. 3 disulfides stabilise this stretch: C50/C105, C63/C116, and C81/C131. The Nucleolar localization signal motif lies at 55–59 (RRRGL). Residues C105 and V127 each contribute to the tRNA site. The active-site Proton donor is the H138.

The protein belongs to the pancreatic ribonuclease family. In terms of assembly, homodimer. Interacts with RNH1; inhibiting ANG ribonuclease activity. Interacts with PCNA.

Its subcellular location is the secreted. It localises to the nucleus. The protein resides in the nucleolus. The protein localises to the cytoplasm. It is found in the stress granule. Its activity is regulated as follows. Has weak tRNA ribonuclease activity by itself due to partial autoinhibition by its C-terminus, which folds into a short alpha-helix that partially occludes the substrate-binding site. In absence of stress, the ribonuclease activity is inhibited by RNH1 in the cytoplasm. In response to stress, dissociates from RNH1 in the cytoplasm and associates with cytoplasmic ribosomes with vacant A-sites: ribosomes directly activate the tRNA ribonuclease activity of ANG by refolding the C-terminal alpha-helix. In response to stress, the angiogenic activity of ANG is inhibited by RNH1 in the nucleus. Its function is as follows. Secreted ribonuclease that can either promote or restrict cell proliferation of target cells, depending on the context. Endocytosed in target cells via its receptor PLXNB2 and translocates to the cytoplasm or nucleus. Under stress conditions, localizes to the cytoplasm and promotes the assembly of stress granules (SGs): specifically cleaves a subset of tRNAs within anticodon loops to produce tRNA-derived stress-induced fragments (tiRNAs), resulting in translation repression and inhibition of cell proliferation. tiRNas also prevent formation of apoptosome, thereby promoting cell survival. Preferentially cleaves RNAs between a pyrimidine and an adenosine residue, suggesting that it cleaves the anticodon loop of tRNA(Ala) (32-UUAGCAU-38) after positions 33 and 36. Cleaves a subset of tRNAs, including tRNA(Ala), tRNA(Glu), tRNA(Gly), tRNA(Lys), tRNA(Val), tRNA(His), tRNA(Asp) and tRNA(Sec). Under growth conditions and in differentiated cells, translocates to the nucleus and stimulates ribosomal RNA (rRNA) transcription, including that containing the initiation site sequences of 45S rRNA, thereby promoting cell growth and proliferation. Angiogenin induces vascularization of normal and malignant tissues via its ability to promote rRNA transcription. Involved in hematopoietic stem and progenitor cell (HSPC) growth and survival by promoting rRNA transcription in growth conditions and inhibiting translation in response to stress, respectively. Mediates the crosstalk between myeloid and intestinal epithelial cells to protect the intestinal epithelial barrier integrity: secreted by myeloid cells and promotes intestinal epithelial cells proliferation and survival. Also mediates osteoclast-endothelial cell crosstalk in growing bone: produced by osteoclasts and protects the neighboring vascular cells against senescence by promoting rRNA transcription. The polypeptide is Angiogenin (ANG) (Pan troglodytes (Chimpanzee)).